The sequence spans 297 residues: N-acetylneuraminate lyase (297 aa).

Residues serine 47 and threonine 48 each contribute to the aceneuramate site. Tyrosine 137 serves as the catalytic Proton donor. The active-site Schiff-base intermediate with substrate is lysine 165. 5 residues coordinate aceneuramate: threonine 167, glycine 189, aspartate 191, glutamate 192, and serine 208.

Belongs to the DapA family. NanA subfamily. As to quaternary structure, homotetramer.

It localises to the cytoplasm. It carries out the reaction aceneuramate = aldehydo-N-acetyl-D-mannosamine + pyruvate. It functions in the pathway amino-sugar metabolism; N-acetylneuraminate degradation; D-fructose 6-phosphate from N-acetylneuraminate: step 1/5. Its function is as follows. Catalyzes the reversible aldol cleavage of N-acetylneuraminic acid (sialic acid; Neu5Ac) to form pyruvate and N-acetylmannosamine (ManNAc) via a Schiff base intermediate. The protein is N-acetylneuraminate lyase of Shigella boydii serotype 4 (strain Sb227).